A 421-amino-acid polypeptide reads, in one-letter code: L-Ala-D/L-amino acid epimerase (421 aa).

Substrate-binding positions include Thr-193 and 218–220 (KLK). 3 residues coordinate Mg(2+): Asp-247, Glu-275, and Asp-304. Substrate contacts are provided by residues Lys-328 and 380 to 382 (DLD).

Belongs to the mandelate racemase/muconate lactonizing enzyme family. The cofactor is Mg(2+).

Its function is as follows. Catalyzes the epimerization of various hydrophobic and polar dipeptides. Has epimerase activity with L-Ala-L-Ala, L-Ala-L-Ser, L-Ala-L-Thr and L-Ala-L-Trp (in vitro). The chain is L-Ala-D/L-amino acid epimerase from Populus trichocarpa (Western balsam poplar).